The sequence spans 166 residues: Small ribosomal subunit protein bS6 (166 aa).

A disordered region spans residues 97–166 (EEGPSAMMRK…EEAETATDGE (70 aa)). Residues 105 to 159 (RKADRDRERDDRGGGFRGEREGGFRGDREGGFRGGDRDGGGFRGDRGPRRPREEA) are compositionally biased toward basic and acidic residues.

It belongs to the bacterial ribosomal protein bS6 family.

Its function is as follows. Binds together with bS18 to 16S ribosomal RNA. This is Small ribosomal subunit protein bS6 from Bradyrhizobium diazoefficiens (strain JCM 10833 / BCRC 13528 / IAM 13628 / NBRC 14792 / USDA 110).